A 157-amino-acid polypeptide reads, in one-letter code: Protein Smg homolog (157 aa).

This sequence belongs to the Smg family.

This chain is Protein Smg homolog, found in Aeromonas salmonicida (strain A449).